Here is a 1664-residue protein sequence, read N- to C-terminus: MYND-type zinc finger-containing chromatin reader Zmynd8 (1664 aa).

Composition is skewed to low complexity over residues 1–16 (MEST…SLKS), 30–40 (SPQPQLQSSSL), and 61–84 (SAPP…INVG). Disordered regions lie at residues 1-84 (MEST…INVG), 251-271 (SLSN…LRSE), and 295-323 (LALN…KTPE). The span at 258 to 271 (NDDKGPRRSNLRSE) shows a compositional bias: basic and acidic residues. A compositionally biased stretch (polar residues) spans 296–308 (ALNTSGEGESSLF). Over residues 309–320 (SDASDTKTTTAK) the composition is skewed to low complexity. The PHD-type zinc finger occupies 343 to 389 (DPFCWKCRGCGKLMPCSKCLRSFHSYCVRPATTKFDSSWKCPECQVI). Zn(2+) is bound by residues cysteine 346, cysteine 349, cysteine 358, cysteine 361, histidine 366, cysteine 369, cysteine 383, and cysteine 386. Positions 401–504 (VSVDLLSQLL…KVCRQEANEI (104 aa)) constitute a Bromo domain. The Zn(2+) site is built by cysteine 507, cysteine 510, and cysteine 525. One can recognise a PWWP domain in the interval 528–579 (PHLLLWAKLKGFPYWPAKAMGSSNSTLVNVRFFGKHDRAFVPVKDCFLYSAQ). Disordered stretches follow at residues 672 to 693 (KTKA…KKLS), 747 to 815 (ESVE…QNEN), 857 to 905 (KIPR…RQQE), and 919 to 1139 (TEVM…TNTS). A compositionally biased stretch (polar residues) spans 676–690 (TESGNESDQSPSPTK). The span at 775-784 (HKRKSKHARK) shows a compositional bias: basic residues. Over residues 785 to 800 (QHDNQDNQIEEAEKTG) the composition is skewed to basic and acidic residues. The segment covering 874–884 (IPLPTAPPPKQ) has biased composition (pro residues). Polar residues predominate over residues 935–952 (PANQPQTDQVPLQQETIT). The segment covering 953 to 962 (AQPESQMPAA) has biased composition (low complexity). The segment covering 1006 to 1019 (PPMPLPMPPPPPLP) has biased composition (pro residues). Over residues 1037-1053 (TTIQRVSQKQGGKSTDT) the composition is skewed to polar residues. The segment covering 1073–1097 (SPTHSPLLSTAPSPSASPKPTSTLA) has biased composition (low complexity). 8 residues coordinate Zn(2+): cysteine 1399, cysteine 1402, cysteine 1410, cysteine 1411, cysteine 1417, cysteine 1421, histidine 1429, and cysteine 1433. The MYND-type zinc-finger motif lies at 1399-1433 (CANCMREAQLYCCWNTSYCDYPCQQLHWPGHSATC). The disordered stretch occupies residues 1613–1648 (VPKATGRSGKNNSRMRQTYSNNINNSNPQGMRCNNN). The segment covering 1620 to 1648 (SGKNNSRMRQTYSNNINNSNPQGMRCNNN) has biased composition (polar residues).

Its subcellular location is the nucleus. The protein resides in the chromosome. Chromatin reader that recognizes specific histone signatures to regulate transcription. Plays a role in neuronal development. The polypeptide is MYND-type zinc finger-containing chromatin reader Zmynd8 (Drosophila melanogaster (Fruit fly)).